Here is an 858-residue protein sequence, read N- to C-terminus: Heat shock protein 105 kDa (858 aa).

Serine 2 is modified (N-acetylserine). Lysine 471 carries the N6-acetyllysine modification. Disordered stretches follow at residues 500 to 584 and 796 to 858; these read KVPT…PPEA and CEPV…MDLD. Over residues 504–514 the composition is skewed to acidic residues; it reads EENEMSSEADM. Serine 509 and serine 510 each carry phosphoserine. Residues 532-554 are compositionally biased toward polar residues; that stretch reads QQDNSEAGTQPQVQTDAQQTSQS. Serine 557 is modified (phosphoserine). Residue threonine 561 is modified to Phosphothreonine. 2 stretches are compositionally biased toward basic and acidic residues: residues 563–584 and 805–814; these read EENKIPDADKANEKKVDQPPEA and PKIESPKLER. Serine 809 bears the Phosphoserine mark. Phosphothreonine is present on threonine 815. The segment covering 821–832 has biased composition (basic and acidic residues); the sequence is IDKKEEDLEDKN. The span at 849-858 shows a compositional bias: polar residues; the sequence is EKNSVNMDLD.

This sequence belongs to the heat shock protein 70 family. As to quaternary structure, interacts with HSPA8/HSC70. Interacts with HSPA1A (via NBD) and HSPA1B (via NBD). Phosphorylation on Ser-509 may be important for regulation of the HSPA8/HSC70 chaperone activity.

It localises to the cytoplasm. Its function is as follows. Acts as a nucleotide-exchange factor (NEF) for chaperone proteins HSPA1A and HSPA1B, promoting the release of ADP from HSPA1A/B thereby triggering substrate release. Prevents the aggregation of denatured proteins in cells under severe stress, on which the ATP levels decrease markedly. Inhibits HSPA8/HSC70 ATPase and chaperone activities. In Pongo abelii (Sumatran orangutan), this protein is Heat shock protein 105 kDa (HSPH1).